We begin with the raw amino-acid sequence, 494 residues long: MADAATQLPWEAVIGLETHVQLGTDSKIFTAASTTFGDEPNTHIDPVVCGLPGTLPVLNQKVLEYAVKAAMALNLNIAEHSKFDRKQYFYPDLPKNYQISQFDQPIAEEGWIEVEVAEKGKDTYLKTIGIERLHMEEDAGKLVHAGSDRLAGSTHSLVDYNRAGVALAEIVSKPDLRTGREAAEYASEIRRIMRYLGVSDGNMQEGSLRCDVNISVRRGPDAPFGTKVEIKNMNSFSAIQKAVDYEIKRQVKAYETGEPVVQETRLWDEGKQLTKSMRSKEGASDYRYFPDPDLGPIEVSPEQREGWRAELPELPAAKRHRYADDLGLSQYDARVLTDERQMADYFEAVVTAGADAKLSANWITGDLAAYVNSNRLSFAALPFRPEQLSEMVQLIDGGKISGKIAKEILPELLEKGGSPKAIVDERGLGMISDPAAIEAIVDELLGAHPEEVEAFRGGKTKLQGFFVGQLMKKTGGKADPKLANQILSQKLKGG.

The protein belongs to the GatB/GatE family. GatB subfamily. Heterotrimer of A, B and C subunits.

The catalysed reaction is L-glutamyl-tRNA(Gln) + L-glutamine + ATP + H2O = L-glutaminyl-tRNA(Gln) + L-glutamate + ADP + phosphate + H(+). It carries out the reaction L-aspartyl-tRNA(Asn) + L-glutamine + ATP + H2O = L-asparaginyl-tRNA(Asn) + L-glutamate + ADP + phosphate + 2 H(+). Allows the formation of correctly charged Asn-tRNA(Asn) or Gln-tRNA(Gln) through the transamidation of misacylated Asp-tRNA(Asn) or Glu-tRNA(Gln) in organisms which lack either or both of asparaginyl-tRNA or glutaminyl-tRNA synthetases. The reaction takes place in the presence of glutamine and ATP through an activated phospho-Asp-tRNA(Asn) or phospho-Glu-tRNA(Gln). The sequence is that of Aspartyl/glutamyl-tRNA(Asn/Gln) amidotransferase subunit B from Synechococcus sp. (strain CC9902).